The sequence spans 504 residues: U3 snoRNP-associated protein-like YAO (504 aa).

Residues 1–120 (MKYNNEKKKG…DDDDDEDDDE (120 aa)) form a disordered region. The span at 20-33 (GSNERDPFFEEEPK) shows a compositional bias: basic and acidic residues. Composition is skewed to acidic residues over residues 41–54 (DDDD…DAEE) and 70–81 (EVEDEDEFADET). Positions 89–106 (LAEEMLNRRREAMRRERE) are enriched in basic and acidic residues. Residues 107 to 120 (EADNDDDDDEDDDE) are compositionally biased toward acidic residues. WD repeat units lie at residues 159-198 (KHRR…TDKY), 220-259 (NHSR…HVQA), 262-301 (GHRN…FITE), 304-342 (GHQG…RMIY), 344-382 (APAS…PVFV), 413-452 (SANS…IRPL), and 456-496 (PLTG…QNGV).

This sequence belongs to the WD repeat RRP9 family. As to expression, expressed in tissues with active in cell division such as shoot apexes, root tips, lateral root primordia, embryos, endosperm, pollen grains and embryo sacs.

The protein resides in the nucleus. It localises to the nucleolus. Its function is as follows. Component of a nucleolar small nuclear ribonucleoprotein particle (snoRNP) thought to participate in the processing and modification of pre-ribosomal RNA. Essential for embryogenesis. Plays a critical role in embryo sac development and gametic cell fate. Required for the correct positioning of the first division plane of zygote. May function during early embryogenesis. The polypeptide is U3 snoRNP-associated protein-like YAO (Arabidopsis thaliana (Mouse-ear cress)).